The chain runs to 550 residues: Arginine--tRNA ligase (550 aa).

A 'HIGH' region motif is present at residues Ala-130–Gly-140.

The protein belongs to the class-I aminoacyl-tRNA synthetase family. Monomer.

It localises to the cytoplasm. The enzyme catalyses tRNA(Arg) + L-arginine + ATP = L-arginyl-tRNA(Arg) + AMP + diphosphate. This Mycobacterium ulcerans (strain Agy99) protein is Arginine--tRNA ligase.